Reading from the N-terminus, the 82-residue chain is Large ribosomal subunit protein bL27 (82 aa).

A disordered region spans residues Met1–Leu21.

It belongs to the bacterial ribosomal protein bL27 family.

This Tropheryma whipplei (strain TW08/27) (Whipple's bacillus) protein is Large ribosomal subunit protein bL27.